The chain runs to 263 residues: 3-methyl-2-oxobutanoate hydroxymethyltransferase (263 aa).

Residues Asp46 and Asp85 each coordinate Mg(2+). 3-methyl-2-oxobutanoate contacts are provided by residues 46 to 47 (DS), Asp85, and Lys115. Residue Glu117 participates in Mg(2+) binding. Residue Glu180 is the Proton acceptor of the active site.

The protein belongs to the PanB family. In terms of assembly, homodecamer; pentamer of dimers. Mg(2+) is required as a cofactor.

It localises to the cytoplasm. The catalysed reaction is 3-methyl-2-oxobutanoate + (6R)-5,10-methylene-5,6,7,8-tetrahydrofolate + H2O = 2-dehydropantoate + (6S)-5,6,7,8-tetrahydrofolate. It participates in cofactor biosynthesis; (R)-pantothenate biosynthesis; (R)-pantoate from 3-methyl-2-oxobutanoate: step 1/2. Catalyzes the reversible reaction in which hydroxymethyl group from 5,10-methylenetetrahydrofolate is transferred onto alpha-ketoisovalerate to form ketopantoate. This Corynebacterium diphtheriae (strain ATCC 700971 / NCTC 13129 / Biotype gravis) protein is 3-methyl-2-oxobutanoate hydroxymethyltransferase.